The primary structure comprises 202 residues: Recombination protein RecR (202 aa).

The segment at 59 to 74 (CSVCFHLSAEPVCEIC) adopts a C4-type zinc-finger fold. Positions 82-176 (HTICVVADSR…KVTRIAFGLP (95 aa)) constitute a Toprim domain.

The protein belongs to the RecR family.

May play a role in DNA repair. It seems to be involved in an RecBC-independent recombinational process of DNA repair. It may act with RecF and RecO. This chain is Recombination protein RecR, found in Thermosynechococcus vestitus (strain NIES-2133 / IAM M-273 / BP-1).